Reading from the N-terminus, the 549-residue chain is Membrane protein insertase YidC (549 aa).

Residues 9–29 (LRLILAIALSFLFIALYSYFF) form a helical membrane-spanning segment. A compositionally biased stretch (low complexity) spans 37-51 (TETTKQETTNNHTAT). Positions 37 to 56 (TETTKQETTNNHTATSPTAS) are disordered. The next 5 helical transmembrane spans lie at 328–348 (VIEYGLITFFAKGVFVLLDYL), 351–371 (FVGNWGWAIILLTIIVRIILY), 417–437 (GANPLGGCLPLILQIPVFFAI), 452–472 (WVLWIHDLSIMDPYFILPLLM), and 498–518 (LLPLLFTIFLITFPAGLVLYW).

This sequence belongs to the OXA1/ALB3/YidC family. Type 1 subfamily. Interacts with the Sec translocase complex via SecD. Specifically interacts with transmembrane segments of nascent integral membrane proteins during membrane integration.

Its subcellular location is the cell inner membrane. Its function is as follows. Required for the insertion and/or proper folding and/or complex formation of integral membrane proteins into the membrane. Involved in integration of membrane proteins that insert both dependently and independently of the Sec translocase complex, as well as at least some lipoproteins. Aids folding of multispanning membrane proteins. The sequence is that of Membrane protein insertase YidC from Helicobacter pylori (strain J99 / ATCC 700824) (Campylobacter pylori J99).